We begin with the raw amino-acid sequence, 813 residues long: Protein mac-1 (813 aa).

Coiled coils occupy residues 58–89 and 122–152; these read VREA…VQEI and SDDS…TVLN. 2 disordered regions span residues 97–131 and 152–193; these read TRKR…ERAA and NLYT…GAVS. Residues 158–172 are compositionally biased toward polar residues; that stretch reads SAPSTPVSTPKNQAT. A compositionally biased stretch (low complexity) spans 175–191; it reads PPGASAAPPALPRGLGA. ATP contacts are provided by residues 246 to 253 and 575 to 582; these read GPPGCGKT.

The protein belongs to the AAA ATPase family. In terms of assembly, found in a complex composed of ced-3, ced-4 and mac-1 or of ced-9, ced-4 and mac-1. Within the complex, interacts with ced-4.

Functionally, probably together with ced-9, plays a modest role in preventing ced-4 and caspase ced-3-mediated apoptosis. This is Protein mac-1 from Caenorhabditis elegans.